The primary structure comprises 612 residues: UvrABC system protein C (612 aa).

The region spanning 15-93 is the GIY-YIG domain; the sequence is HLPGVYRMYD…IKQHQPKYNV (79 aa). The UVR domain maps to 203 to 238; it reads SQVIDYLMQKMEIAASELDFETAARFRDQIQSVRAV.

It belongs to the UvrC family. As to quaternary structure, interacts with UvrB in an incision complex.

It localises to the cytoplasm. The UvrABC repair system catalyzes the recognition and processing of DNA lesions. UvrC both incises the 5' and 3' sides of the lesion. The N-terminal half is responsible for the 3' incision and the C-terminal half is responsible for the 5' incision. This is UvrABC system protein C from Haemophilus ducreyi (strain 35000HP / ATCC 700724).